The chain runs to 83 residues: ATP synthase subunit 9, mitochondrial (83 aa).

A run of 2 helical transmembrane segments spans residues 8–28 and 45–72; these read IGAG…GNVL and SFGY…LISS.

This sequence belongs to the ATPase C chain family. F-type ATPases have 2 components, CF(1) - the catalytic core - and CF(0) - the membrane proton channel. CF(1) has five subunits: alpha(3), beta(3), gamma(1), delta(1), epsilon(1). CF(0) has three main subunits: a, b and c.

It localises to the mitochondrion membrane. In terms of biological role, this protein is one of the chains of the nonenzymatic membrane component (F0) of mitochondrial ATPase. The protein is ATP synthase subunit 9, mitochondrial (ATP9) of Helianthus annuus (Common sunflower).